Here is a 285-residue protein sequence, read N- to C-terminus: Pantothenate synthetase (285 aa).

Met-30–His-37 lines the ATP pocket. His-37 acts as the Proton donor in catalysis. Gln-61 contributes to the (R)-pantoate binding site. Gln-61 provides a ligand contact to beta-alanine. Gly-148 to Asp-151 contributes to the ATP binding site. A (R)-pantoate-binding site is contributed by Gln-154. Arg-185 to Arg-188 is a binding site for ATP.

It belongs to the pantothenate synthetase family. In terms of assembly, homodimer.

It is found in the cytoplasm. The catalysed reaction is (R)-pantoate + beta-alanine + ATP = (R)-pantothenate + AMP + diphosphate + H(+). The protein operates within cofactor biosynthesis; (R)-pantothenate biosynthesis; (R)-pantothenate from (R)-pantoate and beta-alanine: step 1/1. Catalyzes the condensation of pantoate with beta-alanine in an ATP-dependent reaction via a pantoyl-adenylate intermediate. This Alcanivorax borkumensis (strain ATCC 700651 / DSM 11573 / NCIMB 13689 / SK2) protein is Pantothenate synthetase.